We begin with the raw amino-acid sequence, 1010 residues long: Retinoblastoma-related protein 1 (1010 aa).

Residues 1–23 (MEGAAPPASSGSEVTGAGSGKVD) are disordered. Residues 419–619 (TPVSTAMTTA…EKGSSMYNSL (201 aa)) are domain A. Residues 419–861 (TPVSTAMTTA…NEVFIPTVKP (443 aa)) are pocket. The interval 620–730 (IVARPTLSAE…PAAGGELCAE (111 aa)) is spacer. The disordered stretch occupies residues 657-679 (LPPLPFQKQEHSPDKDEVRSPKR). The segment covering 664 to 679 (KQEHSPDKDEVRSPKR) has biased composition (basic and acidic residues). Positions 731–861 (TGIGVFLSKI…NEVFIPTVKP (131 aa)) are domain B. The segment at 868 to 898 (SGTSPNKKNEEKCAADGPYPESPRLSRFPNL) is disordered.

It belongs to the retinoblastoma protein (RB) family.

Its subcellular location is the nucleus. In terms of biological role, regulator of biological processes that recruits a histone deacetylase to control gene transcription. May play a role in the entry into mitosis, negatively regulating the cell proliferation. Formation of stable complexes with geminiviridae replication-associated proteins may create a cellular environment which favors viral DNA replication. The chain is Retinoblastoma-related protein 1 (RBR1) from Oryza sativa subsp. indica (Rice).